The sequence spans 213 residues: Protein-L-isoaspartate O-methyltransferase (213 aa).

Serine 62 is a catalytic residue.

This sequence belongs to the methyltransferase superfamily. L-isoaspartyl/D-aspartyl protein methyltransferase family.

The protein resides in the cytoplasm. The catalysed reaction is [protein]-L-isoaspartate + S-adenosyl-L-methionine = [protein]-L-isoaspartate alpha-methyl ester + S-adenosyl-L-homocysteine. In terms of biological role, catalyzes the methyl esterification of L-isoaspartyl residues in peptides and proteins that result from spontaneous decomposition of normal L-aspartyl and L-asparaginyl residues. It plays a role in the repair and/or degradation of damaged proteins. In Desulfovibrio desulfuricans (strain ATCC 27774 / DSM 6949 / MB), this protein is Protein-L-isoaspartate O-methyltransferase.